The primary structure comprises 161 residues: Protein YzcX (161 aa).

The chain is Protein YzcX (yzcX) from Escherichia coli (strain K12).